The chain runs to 35 residues: Augerpeptide hheTx4 (35 aa).

Contains 4 disulfide bonds. As to expression, expressed by the venom duct.

It is found in the secreted. This is Augerpeptide hheTx4 from Hastula hectica (Sea snail).